The primary structure comprises 681 residues: UvrABC system protein B (681 aa).

Positions 32-419 (ARLSRGERDV…GGEYVEQVIR (388 aa)) constitute a Helicase ATP-binding domain. ATP is bound at residue 45-52 (GATGTGKS). The short motif at 98–121 (YYDYYQPEAYIAQTDTYIEKDSSI) is the Beta-hairpin element. The region spanning 436–602 (QIDDLIHEIK…PLRKKIADIL (167 aa)) is the Helicase C-terminal domain. Polar residues predominate over residues 607–616 (ESKAESTAPS). Residues 607–626 (ESKAESTAPSSDAVVVSKTN) are disordered. Residues 636–671 (RSLIDDLTTQMGTAARELKFELAGRLRDEIAELKKE) form the UVR domain.

It belongs to the UvrB family. As to quaternary structure, forms a heterotetramer with UvrA during the search for lesions. Interacts with UvrC in an incision complex.

The protein localises to the cytoplasm. Its function is as follows. The UvrABC repair system catalyzes the recognition and processing of DNA lesions. A damage recognition complex composed of 2 UvrA and 2 UvrB subunits scans DNA for abnormalities. Upon binding of the UvrA(2)B(2) complex to a putative damaged site, the DNA wraps around one UvrB monomer. DNA wrap is dependent on ATP binding by UvrB and probably causes local melting of the DNA helix, facilitating insertion of UvrB beta-hairpin between the DNA strands. Then UvrB probes one DNA strand for the presence of a lesion. If a lesion is found the UvrA subunits dissociate and the UvrB-DNA preincision complex is formed. This complex is subsequently bound by UvrC and the second UvrB is released. If no lesion is found, the DNA wraps around the other UvrB subunit that will check the other stand for damage. This is UvrABC system protein B from Corynebacterium diphtheriae (strain ATCC 700971 / NCTC 13129 / Biotype gravis).